A 259-amino-acid chain; its full sequence is Sesquipedalian-2 (259 aa).

The region spanning 17-121 (PADHTGFLRS…WVKALSRASF (105 aa)) is the PH domain. Residues 124–150 (MRLVVRELESQLQDARQSLALHRCASQ) are a coiled coil. Positions 155–178 (SCSKSQAPDHRAPDPENGHFLPRD) are disordered. Residues 161–178 (APDHRAPDPENGHFLPRD) are compositionally biased toward basic and acidic residues. Positions 223–235 (CFSTLHDWYGKEI) match the F&amp;H motif.

The protein belongs to the sesquipedalian family. As to quaternary structure, forms homodimers and heterodimers with PHETA1. Interacts with OCRL and INPP5B.

It localises to the early endosome. The protein resides in the recycling endosome. Its subcellular location is the golgi apparatus. It is found in the trans-Golgi network. The protein localises to the cytoplasmic vesicle. It localises to the clathrin-coated vesicle. Plays a role in endocytic trafficking. Required for receptor recycling from endosomes, both to the trans-Golgi network and the plasma membrane. This chain is Sesquipedalian-2, found in Mus musculus (Mouse).